The primary structure comprises 139 residues: Acidic phospholipase A2 Ts-A4 (139 aa).

The signal sequence occupies residues 1–16 (MRTLWILAVLLVGVEG). Intrachain disulfides connect cysteine 42–cysteine 132, cysteine 44–cysteine 60, cysteine 59–cysteine 111, cysteine 65–cysteine 139, cysteine 66–cysteine 104, cysteine 73–cysteine 97, and cysteine 91–cysteine 102. Tyrosine 43, glycine 45, and glycine 47 together coordinate Ca(2+). Residue histidine 63 is part of the active site. Aspartate 64 serves as a coordination point for Ca(2+). Aspartate 105 is a catalytic residue.

Requires Ca(2+) as cofactor. Expressed by the venom gland.

It is found in the secreted. It carries out the reaction a 1,2-diacyl-sn-glycero-3-phosphocholine + H2O = a 1-acyl-sn-glycero-3-phosphocholine + a fatty acid + H(+). Its function is as follows. PLA2 catalyzes the calcium-dependent hydrolysis of the 2-acyl groups in 3-sn-phosphoglycerides. In Trimeresurus stejnegeri (Chinese green tree viper), this protein is Acidic phospholipase A2 Ts-A4.